A 551-amino-acid polypeptide reads, in one-letter code: Peptidyl-prolyl cis-trans isomerase-like 4 (551 aa).

The PPIase cyclophilin-type domain maps to Met1–Val185. The disordered stretch occupies residues Gly54–Ser88. Polar residues predominate over residues Ile66–Ser88. In terms of domain architecture, RRM spans Asn262–Ser340. The interval Arg352–Arg551 is disordered. Basic and acidic residues-rich tracts occupy residues Lys384 to Pro397 and Ser408 to Asp454. Over residues His455–Val464 the composition is skewed to basic residues. Basic and acidic residues predominate over residues Arg465 to Arg551.

The protein belongs to the cyclophilin-type PPIase family. PPIL4 subfamily.

It is found in the nucleus. It carries out the reaction [protein]-peptidylproline (omega=180) = [protein]-peptidylproline (omega=0). Its function is as follows. PPIases accelerate the folding of proteins. It catalyzes the cis-trans isomerization of proline imidic peptide bonds in oligopeptides. The sequence is that of Peptidyl-prolyl cis-trans isomerase-like 4 (CYP6) from Mycosarcoma maydis (Corn smut fungus).